We begin with the raw amino-acid sequence, 341 residues long: UDP-N-acetylenolpyruvoylglucosamine reductase (341 aa).

The 171-residue stretch at Val15 to Thr185 folds into the FAD-binding PCMH-type domain. Arg161 is a catalytic residue. Residue Ser231 is the Proton donor of the active site. Residue Glu327 is part of the active site.

Belongs to the MurB family. Requires FAD as cofactor.

It is found in the cytoplasm. The enzyme catalyses UDP-N-acetyl-alpha-D-muramate + NADP(+) = UDP-N-acetyl-3-O-(1-carboxyvinyl)-alpha-D-glucosamine + NADPH + H(+). Its pathway is cell wall biogenesis; peptidoglycan biosynthesis. Its function is as follows. Cell wall formation. The chain is UDP-N-acetylenolpyruvoylglucosamine reductase from Shewanella oneidensis (strain ATCC 700550 / JCM 31522 / CIP 106686 / LMG 19005 / NCIMB 14063 / MR-1).